A 151-amino-acid chain; its full sequence is Endoribonuclease YbeY (151 aa).

Residues His114, His118, and His124 each coordinate Zn(2+).

It belongs to the endoribonuclease YbeY family. The cofactor is Zn(2+).

Its subcellular location is the cytoplasm. Functionally, single strand-specific metallo-endoribonuclease involved in late-stage 70S ribosome quality control and in maturation of the 3' terminus of the 16S rRNA. The protein is Endoribonuclease YbeY of Hamiltonella defensa subsp. Acyrthosiphon pisum (strain 5AT).